The sequence spans 129 residues: uncharacterized protein (129 aa).

2 helical membrane passes run 35-55 and 98-118; these read IVDG…WKIP and ILLL…IILL.

The protein resides in the membrane. This is an uncharacterized protein from Saccharomyces cerevisiae (strain ATCC 204508 / S288c) (Baker's yeast).